The following is a 246-amino-acid chain: MKIKSFLGKSLTLVVLGVFLFSGWKIGMELYENKHNQTILDDAKAVYTKDAATTNVNGEVRDELRDLQKLNKDMVGWLTIIDTEIDYPILQSKDNDYYLHHNYKNEKARAGSIFKDYRNTNEFLDKNTIIYGHNMKDGSMFADLRKYLDKDFLVAHPTFSYESGLTNYEVEIFAVYETTTDFYYIETEFPETTDFEDYLQKVKQQSVYTSNVKVSGKDRIITLSTCDTEKDYEKGRMVIQGKLVTK.

A helical membrane pass occupies residues 5–24 (SFLGKSLTLVVLGVFLFSGW).

The protein belongs to the bacterial sortase family. Class B subfamily.

The protein resides in the cell membrane. Transpeptidase that anchors surface proteins to the cell wall. Recognizes and modifies its substrate by proteolytic cleavage of a C-terminal sorting signal. Following cleavage, a covalent intermediate is formed via a thioester bond between the sortase and its substrate, which is then transferred and covalently attached to the cell wall. Catalyzes a cell wall sorting reaction in which a surface protein with the consensus sorting signal NP(Q/K)(T/S)(N/G/S)(D/A) is cleaved between the fourth and fifth residues, and the fourth position is linked to the cell wall. This is not the major sortase in Listeria, it seems to anchor only 2 proteins, Hbp2 (SvpA) and Hbp1. The polypeptide is Sortase B (Listeria monocytogenes serovar 1/2a (strain ATCC BAA-679 / EGD-e)).